A 442-amino-acid chain; its full sequence is 3-dehydroquinate synthase, chloroplastic (442 aa).

A chloroplast-targeting transit peptide spans 1–61 (MASSFCPKQA…TTRLKVLATS (61 aa)). Residues asparagine 119, 150 to 152 (DGE), lysine 155, 183 to 188 (GGVIGD), 208 to 209 (TT), lysine 221, lysine 230, and 248 to 251 (TLNT) contribute to the NAD(+) site. An a divalent metal cation-binding site is contributed by glutamate 263. Lysine 305 contacts NAD(+). Residues histidine 326 and histidine 343 each contribute to the a divalent metal cation site.

It belongs to the sugar phosphate cyclases superfamily. Dehydroquinate synthase family. Homodimer. The cofactor is a divalent metal cation. Requires NAD(+) as cofactor. As to expression, highly expressed in roots. Lower expression in stems, flowers and cotyledons. Barely detected in leaves.

The protein localises to the plastid. The protein resides in the chloroplast. It catalyses the reaction 7-phospho-2-dehydro-3-deoxy-D-arabino-heptonate = 3-dehydroquinate + phosphate. It participates in metabolic intermediate biosynthesis; chorismate biosynthesis; chorismate from D-erythrose 4-phosphate and phosphoenolpyruvate: step 2/7. In terms of biological role, catalyzes the second step in the shikimate pathway. This chain is 3-dehydroquinate synthase, chloroplastic (DHQS), found in Solanum lycopersicum (Tomato).